We begin with the raw amino-acid sequence, 510 residues long: NAD(P)H-quinone oxidoreductase subunit 2 A, chloroplastic (510 aa).

The next 13 membrane-spanning stretches (helical) occupy residues 24–44 (LLLF…GLIL), 57–77 (MPWL…ALLF), 99–119 (IFQF…VEYI), 124–144 (MAIT…MFLC), 149–169 (LITI…LSGY), 183–203 (YLLM…WLYG), 227–247 (PGIS…LSPA), 295–315 (WHLL…LIAI), 323–343 (MLAY…IVGD), 354–374 (YMLF…LFGL), 395–415 (ALSL…AGFF), 418–438 (LHLF…IGLL), and 482–502 (LSMI…SPII).

This sequence belongs to the complex I subunit 2 family. In terms of assembly, NDH is composed of at least 16 different subunits, 5 of which are encoded in the nucleus.

It localises to the plastid. Its subcellular location is the chloroplast thylakoid membrane. The enzyme catalyses a plastoquinone + NADH + (n+1) H(+)(in) = a plastoquinol + NAD(+) + n H(+)(out). It carries out the reaction a plastoquinone + NADPH + (n+1) H(+)(in) = a plastoquinol + NADP(+) + n H(+)(out). Functionally, NDH shuttles electrons from NAD(P)H:plastoquinone, via FMN and iron-sulfur (Fe-S) centers, to quinones in the photosynthetic chain and possibly in a chloroplast respiratory chain. The immediate electron acceptor for the enzyme in this species is believed to be plastoquinone. Couples the redox reaction to proton translocation, and thus conserves the redox energy in a proton gradient. The protein is NAD(P)H-quinone oxidoreductase subunit 2 A, chloroplastic of Populus trichocarpa (Western balsam poplar).